Reading from the N-terminus, the 2291-residue chain is Protein Ycf2 B (2291 aa).

1642–1649 provides a ligand contact to ATP; it reads GSIGTGRS.

Belongs to the Ycf2 family.

The protein resides in the plastid. Its subcellular location is the chloroplast stroma. In terms of biological role, probable ATPase of unknown function. Its presence in a non-photosynthetic plant (Epifagus virginiana) and experiments in tobacco indicate that it has an essential function which is probably not related to photosynthesis. The sequence is that of Protein Ycf2 B (ycf2-B) from Atropa belladonna (Belladonna).